The chain runs to 224 residues: Type II restriction enzyme BstVI (224 aa).

Belongs to the XhoI type II restriction endonuclease family.

It catalyses the reaction Endonucleolytic cleavage of DNA to give specific double-stranded fragments with terminal 5'-phosphates.. Functionally, a P subtype restriction enzyme that recognizes the double-stranded sequence 5'-CTCGAG-3' and cleaves after C-1. The chain is Type II restriction enzyme BstVI from Geobacillus stearothermophilus (Bacillus stearothermophilus).